The sequence spans 370 residues: Alpha-(1,3)-fucosyltransferase 7 (370 aa).

Residues 1-36 lie on the Cytoplasmic side of the membrane; that stretch reads MVQGCLCWRGCCDLKTSFPWVTNSRRLWMNCIGCNP. Residues 37 to 59 form a helical; Signal-anchor for type II membrane protein membrane-spanning segment; that stretch reads VWRLRAWGCLAGGTTLMVIWLFW. Residues 60–370 lie on the Lumenal side of the membrane; sequence LLRSVPGGAP…YEDLESWFQA (311 aa). An N-linked (GlcNAc...) asparagine glycan is attached at Asn86. Cys96 and Cys104 form a disulfide bridge. Asn109 is a glycosylation site (N-linked (GlcNAc...) asparagine). Cys239 and Cys242 are disulfide-bonded. N-linked (GlcNAc...) asparagine glycosylation is present at Asn319. The cysteines at positions 346 and 349 are disulfide-linked.

It belongs to the glycosyltransferase 10 family. N-glycosylated. As to expression, expressed in lymph node and kidney.

It localises to the golgi apparatus. The protein resides in the golgi stack membrane. The catalysed reaction is an N-acetyl-alpha-neuraminyl-(2-&gt;3)-beta-D-galactosyl-(1-&gt;4)-N-acetyl-beta-D-glucosaminyl derivative + GDP-beta-L-fucose = an alpha-Neu5Ac-(2-&gt;3)-beta-D-Gal-(1-&gt;4)-[alpha-L-Fuc-(1-&gt;3)]-beta-D-GlcNAc derivative + GDP + H(+). It carries out the reaction a neolactoside IV(3)-alpha-NeuAc-nLc4Cer + GDP-beta-L-fucose = a neolactoside IV(3)-alpha-NeuNAc,III(3)-alpha-Fuc-nLc4Cer + GDP + H(+). It catalyses the reaction a neolactoside VI(3)-alpha-NeuNAc-nLc6Cer + GDP-beta-L-fucose = a neolactoside VI(3)-alpha-NeuAc,V(3)-alphaFuc-nLc6Cer + GDP + H(+). The enzyme catalyses an alpha-Neu5Ac-(2-&gt;3)-beta-D-Gal-(1-&gt;4)-beta-D-GlcNAc-(1-&gt;3)-beta-D-Gal-(1-&gt;4)-[alpha-L-Fuc-(1-&gt;3)]-beta-D-GlcNAc derivative + GDP-beta-L-fucose = an alpha-Neu5Ac-(2-&gt;3)-beta-D-Gal-(1-&gt;4)-[alpha-L-Fuc-(1-&gt;3)]-beta-D-GlcNAc-(1-&gt;3)-beta-D-Gal-(1-&gt;4)-[alpha-L-Fuc-(1-&gt;3)]-beta-D-GlcNAc derivative + GDP + H(+). The catalysed reaction is an alpha-Neu5Ac-(2-&gt;3)-beta-D-Gal-(1-&gt;4)-beta-D-GlcNAc6S derivative + GDP-beta-L-fucose = an alpha-Neu5Ac-(2-&gt;3)-beta-D-Gal-(1-&gt;4)-[alpha-L-Fuc-(1-&gt;3)]-beta-D-GlcNAc6S derivative + GDP + H(+). It carries out the reaction alpha-Neu5Ac-(2-&gt;3)-beta-D-Gal-(1-&gt;4)-beta-D-GlcNAc-(1-&gt;3)-beta-D-Gal-(1-&gt;4)-D-Glc + GDP-beta-L-fucose = alpha-Neu5Ac-(2-&gt;3)-beta-D-Gal-(1-&gt;4)-[alpha-L-Fuc-(1-&gt;3)]-beta-D-GlcNAc-(1-&gt;3)-beta-D-Gal-(1-&gt;4)-D-Glc + GDP + H(+). It catalyses the reaction alpha-Neu5Ac-(2-&gt;3)-beta-D-Gal-(1-&gt;4)-beta-D-GlcNAc-(1-&gt;3)-beta-D-Gal-(1-&gt;4)-[alpha-L-Fuc-(1-&gt;3)]-beta-D-GlcNAc-(1-&gt;3)-beta-D-Gal-(1-&gt;4)-beta-D-GlcNAc + GDP-beta-L-fucose = alpha-Neu5Ac-(2-&gt;3)-beta-D-Gal-(1-&gt;4)-[alpha-L-Fuc-(1-&gt;3)]-beta-D-GlcNAc-(1-&gt;3)-beta-D-Gal-(1-&gt;4)-[alpha-L-Fuc-(1-&gt;3)]-beta-D-GlcNAc-(1-&gt;3)-beta-D-Gal-(1-&gt;4)-beta-D-GlcNAc + GDP + H(+). The enzyme catalyses alpha-Neu5Ac-(2-&gt;3)-beta-D-Gal-(1-&gt;4)-beta-D-GlcNAc-(1-&gt;3)-beta-D-Gal-(1-&gt;4)-beta-D-GlcNAc-(1-&gt;3)-beta-D-Gal-(1-&gt;4)-beta-D-GlcNAc + GDP-beta-L-fucose = alpha-Neu5Ac-(2-&gt;3)-beta-D-Gal-(1-&gt;4)-[alpha-L-Fuc-(1-&gt;3)]-beta-D-GlcNAc-(1-&gt;3)-beta-D-Gal-(1-&gt;4)-beta-D-GlcNAc-(1-&gt;3)-beta-D-Gal-(1-&gt;4)-beta-D-GlcNAc + GDP + H(+). It participates in protein modification; protein glycosylation. With respect to regulation, inhibited by NaCl. Inhibited by GDP in a concentration dependent manner, with an IC(50) value of 93 uM. Also inhibited by GMP and GTP. Inhibited by N-ethylmaleimide. Activated by poly(ethylene glycol) by enhancing the thermal stability of FUT7. Activated by Mn2+, Ca2+, and Mg2+. Both panosialin A and B inhibit activity with IC(50) values of 4.8 and 5.3 ug/ml, respectively. Inhibited by gallic acid (GA) and (-)-epigallocatechin gallate (EGCG) in a time-dependent and irreversible manner with IC(50) values of 60 and 700 nM, respectively. Catalyzes the transfer of L-fucose, from a guanosine diphosphate-beta-L-fucose, to the N-acetyl glucosamine (GlcNAc) of a distal alpha2,3 sialylated lactosamine unit of a glycoprotein or a glycolipid-linked sialopolylactosamines chain through an alpha-1,3 glycosidic linkage and participates in the final fucosylation step in the biosynthesis of the sialyl Lewis X (sLe(x)), a carbohydrate involved in cell and matrix adhesion during leukocyte trafficking and fertilization. In vitro, also synthesizes sialyl-dimeric-Lex structures, from VIM-2 structures and both di-fucosylated and trifucosylated structures from mono-fucosylated precursors. However does not catalyze alpha 1-3 fucosylation when an internal alpha 1-3 fucosylation is present in polylactosamine chain and the fucosylation rate of the internal GlcNAc residues is reduced once fucose has been added to the distal GlcNAc. Also catalyzes the transfer of a fucose from GDP-beta-fucose to the 6-sulfated a(2,3)sialylated substrate to produce 6-sulfo sLex mediating significant L-selectin-dependent cell adhesion. Through sialyl-Lewis(x) biosynthesis, can control SELE- and SELP-mediated cell adhesion with leukocytes and allows leukocytes tethering and rolling along the endothelial tissue thereby enabling the leukocytes to accumulate at a site of inflammation. May enhance embryo implantation through sialyl Lewis X (sLeX)-mediated adhesion of embryo cells to endometrium. May affect insulin signaling by up-regulating the phosphorylation and expression of some signaling molecules involved in the insulin-signaling pathway through SLe(x) which is present on the glycans of the INSRR alpha subunit. The sequence is that of Alpha-(1,3)-fucosyltransferase 7 from Rattus norvegicus (Rat).